Consider the following 622-residue polypeptide: Cilia- and flagella-associated protein 206 (622 aa).

Positions 571–592 (QVYPPKDTSTQSMREDSTGVPR) are disordered.

The protein belongs to the CFAP206 family.

The protein localises to the cytoplasm. It is found in the cytoskeleton. It localises to the cilium axoneme. The protein resides in the cilium basal body. Essential for sperm motility and is involved in the regulation of the beating frequency of motile cilia on the epithelial cells of the respiratory tract. Required for the establishment of radial spokes in sperm flagella. This is Cilia- and flagella-associated protein 206 from Macaca fascicularis (Crab-eating macaque).